The sequence spans 157 residues: Endoribonuclease YbeY (157 aa).

Positions 116, 120, and 126 each coordinate Zn(2+).

It belongs to the endoribonuclease YbeY family. It depends on Zn(2+) as a cofactor.

The protein localises to the cytoplasm. Its function is as follows. Single strand-specific metallo-endoribonuclease involved in late-stage 70S ribosome quality control and in maturation of the 3' terminus of the 16S rRNA. The protein is Endoribonuclease YbeY of Renibacterium salmoninarum (strain ATCC 33209 / DSM 20767 / JCM 11484 / NBRC 15589 / NCIMB 2235).